The primary structure comprises 117 residues: Large ribosomal subunit protein bL20 (117 aa).

The protein belongs to the bacterial ribosomal protein bL20 family.

In terms of biological role, binds directly to 23S ribosomal RNA and is necessary for the in vitro assembly process of the 50S ribosomal subunit. It is not involved in the protein synthesizing functions of that subunit. The chain is Large ribosomal subunit protein bL20 from Maridesulfovibrio salexigens (strain ATCC 14822 / DSM 2638 / NCIMB 8403 / VKM B-1763) (Desulfovibrio salexigens).